Here is a 789-residue protein sequence, read N- to C-terminus: Glycerol-3-phosphate acyltransferase (789 aa).

An HXXXXD motif motif is present at residues 275 to 280; the sequence is SHRSYI.

The protein belongs to the GPAT/DAPAT family.

It is found in the cell membrane. It carries out the reaction sn-glycerol 3-phosphate + an acyl-CoA = a 1-acyl-sn-glycero-3-phosphate + CoA. It functions in the pathway phospholipid metabolism; CDP-diacylglycerol biosynthesis; CDP-diacylglycerol from sn-glycerol 3-phosphate: step 1/3. The protein is Glycerol-3-phosphate acyltransferase of Mycobacterium tuberculosis (strain ATCC 25177 / H37Ra).